Consider the following 823-residue polypeptide: Leucine--tRNA ligase (823 aa).

Positions 42-52 match the 'HIGH' region motif; the sequence is PYPSGTLHMGH. Residues 575 to 579 carry the 'KMSKS' region motif; that stretch reads KMSKS. Lys578 is a binding site for ATP.

The protein belongs to the class-I aminoacyl-tRNA synthetase family.

It is found in the cytoplasm. The enzyme catalyses tRNA(Leu) + L-leucine + ATP = L-leucyl-tRNA(Leu) + AMP + diphosphate. In Legionella pneumophila (strain Lens), this protein is Leucine--tRNA ligase.